Here is a 349-residue protein sequence, read N- to C-terminus: Ribosomal RNA large subunit methyltransferase M (349 aa).

S-adenosyl-L-methionine contacts are provided by residues 216-219 (APGG), D235, D255, and D271. Residue K300 is the Proton acceptor of the active site.

The protein belongs to the class I-like SAM-binding methyltransferase superfamily. RNA methyltransferase RlmE family. RlmM subfamily. Monomer.

It localises to the cytoplasm. The catalysed reaction is cytidine(2498) in 23S rRNA + S-adenosyl-L-methionine = 2'-O-methylcytidine(2498) in 23S rRNA + S-adenosyl-L-homocysteine + H(+). Catalyzes the 2'-O-methylation at nucleotide C2498 in 23S rRNA. This is Ribosomal RNA large subunit methyltransferase M from Saccharophagus degradans (strain 2-40 / ATCC 43961 / DSM 17024).